The following is a 686-amino-acid chain: Asparagine-rich protein (686 aa).

An N-terminal signal peptide occupies residues 1-18 (MKGTSALLLIGFFHATIS). Disordered regions lie at residues 34 to 73 (KRGN…DKTA), 125 to 148 (SLTS…SSSI), and 201 to 236 (ITRQ…QPPN). A compositionally biased stretch (polar residues) spans 37 to 49 (NLNTGGQITSNSA). Positions 62–73 (EPPKRRNTDKTA) are enriched in basic and acidic residues.

As to expression, prismatic layer of shell (at protein level). Expressed primarily in the mantle with highest level in the mantle edge and lower level in the mantle pallium.

It localises to the secreted. This is Asparagine-rich protein from Margaritifera margaritifera (Freshwater pearl mussel).